Reading from the N-terminus, the 505-residue chain is Ribose import ATP-binding protein RbsA (505 aa).

2 ABC transporter domains span residues 12–249 (LQMK…VGRK) and 259–504 (VKKG…VAFS). 44 to 51 (GENGAGKS) contributes to the ATP binding site.

The protein belongs to the ABC transporter superfamily. Ribose importer (TC 3.A.1.2.1) family. The complex is composed of an ATP-binding protein (RbsA), two transmembrane proteins (RbsC) and a solute-binding protein (RbsB).

The protein resides in the cell membrane. It catalyses the reaction D-ribose(out) + ATP + H2O = D-ribose(in) + ADP + phosphate + H(+). In terms of biological role, part of the ABC transporter complex RbsABC involved in ribose import. Responsible for energy coupling to the transport system. The chain is Ribose import ATP-binding protein RbsA from Clostridium tetani (strain Massachusetts / E88).